A 265-amino-acid polypeptide reads, in one-letter code: O-methyltransferase NEC2 (265 aa).

This sequence belongs to the methyltransferase superfamily.

The catalysed reaction is desmethylnectriapyrone + S-adenosyl-L-methionine = nectriapyrone + S-adenosyl-L-homocysteine + H(+). Functionally, O-methyltransferase; part of the gene cluster that mediates the biosynthesis of nectriapyrone and its analogs phomopyrone A, acropyrone and zaepyrone. The nectriapyrone biosynthetic gene cluster consists of two genes, the highly reducing polyketide synthase NEC1 that produces a demethylated analog of nectriapyrone from one unit of acetyl-CoA and one unit of malonyl-CoA; and the O-methyltransferase NEC2 that further methylates the NEC1 product to yield nectriapyrone. Nectriapyrone is further hydrolyzed to nectriapyrone D, also known as gulypyrone B, by an unidentified hydrolase localized outside the nectriapyrone cluster. The chain is O-methyltransferase NEC2 from Pyricularia oryzae (strain 70-15 / ATCC MYA-4617 / FGSC 8958) (Rice blast fungus).